We begin with the raw amino-acid sequence, 68 residues long: Erythrodihydroneopterin triphosphate synthetase (68 aa).

S66 is subject to Phosphoserine.

In Cavia porcellus (Guinea pig), this protein is Erythrodihydroneopterin triphosphate synthetase.